A 152-amino-acid polypeptide reads, in one-letter code: FAD synthase (152 aa).

ATP contacts are provided by residues 9–10 (TF), 14–17 (HPGH), and Asp92.

This sequence belongs to the archaeal FAD synthase family. As to quaternary structure, homodimer. A divalent metal cation is required as a cofactor.

It catalyses the reaction FMN + ATP + H(+) = FAD + diphosphate. It participates in cofactor biosynthesis; FAD biosynthesis; FAD from FMN: step 1/1. In terms of biological role, catalyzes the transfer of the AMP portion of ATP to flavin mononucleotide (FMN) to produce flavin adenine dinucleotide (FAD) coenzyme. This chain is FAD synthase, found in Ferroglobus placidus (strain DSM 10642 / AEDII12DO).